Here is a 940-residue protein sequence, read N- to C-terminus: UvrABC system protein A (940 aa).

31–38 (GLSGSGKS) serves as a coordination point for ATP. The C4-type zinc-finger motif lies at 252–279 (CPHCGYSMQELEPRLFSFNNPAGACGTC). 2 consecutive ABC transporter domains span residues 309-586 (WDQK…PDSL) and 606-936 (RDKN…RFLK). 639-646 (GVSGSGKS) is a binding site for ATP. A C4-type zinc finger spans residues 739–765 (CEACQGDGVIKVEMHFLPDVYVPCDVC).

This sequence belongs to the ABC transporter superfamily. UvrA family. As to quaternary structure, forms a heterotetramer with UvrB during the search for lesions.

The protein localises to the cytoplasm. Its function is as follows. The UvrABC repair system catalyzes the recognition and processing of DNA lesions. UvrA is an ATPase and a DNA-binding protein. A damage recognition complex composed of 2 UvrA and 2 UvrB subunits scans DNA for abnormalities. When the presence of a lesion has been verified by UvrB, the UvrA molecules dissociate. This Vibrio vulnificus (strain CMCP6) protein is UvrABC system protein A.